Reading from the N-terminus, the 71-residue chain is Large ribosomal subunit protein bL31 (71 aa).

Zn(2+) contacts are provided by cysteine 16, cysteine 18, cysteine 38, and cysteine 41.

The protein belongs to the bacterial ribosomal protein bL31 family. Type A subfamily. As to quaternary structure, part of the 50S ribosomal subunit. It depends on Zn(2+) as a cofactor.

Binds the 23S rRNA. This Laribacter hongkongensis (strain HLHK9) protein is Large ribosomal subunit protein bL31.